The chain runs to 997 residues: MPATSMHQEDKQSANGLNLSPLERIKIEKHYGGGATLAFISNQHDELAQVLSRADILKIASYDCAAQALQAVLDCGPMLGKRGFSRADIVRIAGNGGGAQALYSVLDVEPTLGKRGFSQVDVVKIAGGGAQALHTVLEIGPTLGERGFSRGDIVTIAGNNGGAQALQAVLELEPTLRERGFNQADIVKIAGNGGGAQALQAVLDVEPALGKRGFSRVDIAKIAGGGAQALQAVLGLEPTLRKRGFHPTDIIKIAGNNGGAQALQAVLDLELMLRERGFSQADIVKMASNIGGAQALQAVLNLEPALCERGFSQPDIVKMAGNSGGAQALQAVLDLELAFRERGFSQADIVKMASNIGGAQALQAVLELEPALHERGFSQANIVKMAGNSGGAQALQAVLDLELVFRERGFSQPEIVEMAGNIGGAQALHTVLDLELAFRERGVRQADIVKIVGNNGGAQALQAVFELEPTLRERGFNQATIVKIAANGGGAQALYSVLDVEPTLDKRGFSRVDIVKIAGGGAQALHTAFELEPTLRKRGFNPTDIVKIAGNKGGAQALQAVLELEPALRERGFNQATIVKMAGNAGGAQALYSVLDVEPALRERGFSQPEIVKIAGNIGGAQALHTVLELEPTLHKRGFNPTDIVKIAGNSGGAQALQAVLELEPAFRERGFGQPDIVKMASNIGGAQALQAVLELEPALRERGFSQPDIVEMAGNIGGAQALQAVLELEPAFRERGFSQSDIVKIAGNIGGAQALQAVLELEPTLRESDFRQADIVNIAGNDGSTQALKAVIEHGPRLRQRGFNRASIVKIAGNSGGAQALQAVLKHGPTLDERGFNLTNIVKIAGNGGGAQALKAVIEHGPTLQQRGFNLTDIVEMAGKGGGAQALKAVLEHGPTLRQRGFNLIDIVEMASNTGGAQALKTVLEHGPTLRQRDLSLIDIVEIASNGGAQALKAVLKYGPVLMQAGRSNEEIVHVAARRGGAGRIRKMVALLLERQ.

Residues 19-50 (LSPLERIKIEKHYGGGATLAFISNQHDELAQV) form a Cryptic repeat -1 repeat. Residues 51 to 83 (LSRADILKIASYDCAAQALQAVLDCGPMLGKRG) form a Cryptic repeat 0 repeat. 27 Core repeat repeats span residues 84-116 (FSRA…GKRG), 117-147 (FSQV…GERG), 148-180 (FSRG…RERG), 181-213 (FNQA…GKRG), 214-244 (FSRV…RKRG), 245-277 (FHPT…RERG), 278-310 (FSQA…CERG), 311-343 (FSQP…RERG), 344-376 (FSQA…HERG), 377-409 (FSQA…RERG), 410-442 (FSQP…RERG), 443-475 (VRQA…RERG), 476-508 (FNQA…DKRG), 509-539 (FSRV…RKRG), 540-572 (FNPT…RERG), 573-605 (FNQA…RERG), 606-638 (FSQP…HKRG), 639-671 (FNPT…RERG), 672-704 (FGQP…RERG), 705-737 (FSQP…RERG), 738-770 (FSQS…RESD), 771-803 (FRQA…RQRG), 804-836 (FNRA…DERG), 837-869 (FNLT…QQRG), 870-902 (FNLT…RQRG), 903-935 (FNLI…RQRD), and 936-967 (LSLI…MQAG). A buD domain region spans residues 84-967 (FSRADIVRIA…KYGPVLMQAG (884 aa)). 4 ANK repeats span residues 772–801 (RQAD…RLRQ), 805–834 (NRAS…TLDE), 838–867 (NLTN…TLQQ), and 871–900 (NLTD…TLRQ). One copy of the Cryptic repeat +1 repeat lies at 968–997 (RSNEEIVHVAARRGGAGRIRKMVALLLERQ).

Belongs to the transcription activator-like effector (TALE) family. Bat subfamily.

In terms of biological role, binds to DNA in a sequence-specific manner. The sequence is that of Burkholderia TALE-like protein 2 from Mycetohabitans rhizoxinica (strain DSM 19002 / CIP 109453 / HKI 454) (Paraburkholderia rhizoxinica).